The chain runs to 358 residues: Arginine kinase (358 aa).

Residues 6 to 88 (SVEELWAKLD…LDAVIKEYHK (83 aa)) form the Phosphagen kinase N-terminal domain. 61–65 (GVGIY) contributes to the substrate binding site. In terms of domain architecture, Phosphagen kinase C-terminal spans 116–353 (YIVSTRVRVG…EACLAKEKEL (238 aa)). ATP-binding positions include 119-123 (STRVR) and histidine 182. Glutamate 222 serves as a coordination point for substrate. Arginine 226 contributes to the ATP binding site. Cysteine 269 contributes to the substrate binding site. Residues 278-282 (RASVH) and 306-311 (RGIHGE) contribute to the ATP site. A substrate-binding site is contributed by glutamate 311.

The protein belongs to the ATP:guanido phosphotransferase family. As to quaternary structure, monomer.

It carries out the reaction L-arginine + ATP = N(omega)-phospho-L-arginine + ADP + H(+). This is Arginine kinase from Haliotis madaka (Giant abalone).